We begin with the raw amino-acid sequence, 155 residues long: Regulatory protein RecX (155 aa).

Belongs to the RecX family.

Its subcellular location is the cytoplasm. Functionally, modulates RecA activity. This is Regulatory protein RecX from Pseudomonas syringae pv. tomato (strain ATCC BAA-871 / DC3000).